A 2116-amino-acid chain; its full sequence is Unconventional myosin-VIIb (2116 aa).

The Myosin motor domain maps to glutamine 65–serine 760. Glycine 158–threonine 165 contacts ATP. The actin-binding stretch occupies residues leucine 637–glutamate 659. IQ domains are found at residues isoleucine 745–arginine 765, leucine 763–threonine 792, glutamine 786–arginine 815, glutamate 814–glutamine 834, methionine 832–valine 861, and lysine 855–leucine 884. Phosphoserine is present on serine 904. The interval glutamate 916–asparagine 1542 is mediates interaction with ANKS4B. A MyTH4 1 domain is found at histidine 989–lysine 1192. The region spanning isoleucine 1197–alanine 1506 is the FERM 1 domain. Residue serine 1371 is modified to Phosphoserine. The SH3 domain occupies glutamate 1501–threonine 1567. The tract at residues glutamate 1501–threonine 2116 is mediates interaction with CDHR2, CDHR5 and USH1C. MyTH4 domains lie at tyrosine 1644 to glutamate 1793 and glutamate 1790 to leucine 1896. Serine 1645 bears the Phosphoserine mark. The 304-residue stretch at isoleucine 1799–methionine 2102 folds into the FERM 2 domain.

The protein belongs to the TRAFAC class myosin-kinesin ATPase superfamily. Myosin family. In terms of assembly, part of the IMAC/intermicrovillar adhesion complex/intermicrovillar tip-link complex composed of ANKS4B, MYO7B, USH1C, CDHR2 and CDHR5. Interacts with CDHR2. Interacts with CDHR5. Interacts with USH1C. Interacts with ANKS4B; requires initial interaction with USH1C. Interacts with CALML4; the interaction mediates the association of CALML4 with the IMAC/intermicrovillar adhesion complex.

It is found in the cytoplasm. It localises to the cytoskeleton. The protein localises to the cell projection. The protein resides in the microvillus. Myosins are actin-based motor molecules with ATPase activity. Their highly divergent tails are presumed to bind to membranous compartments, which would be moved relative to actin filaments. As part of the intermicrovillar adhesion complex/IMAC plays a role in epithelial brush border differentiation, controlling microvilli organization and length. May link the complex to the actin core bundle of microvilli. This Homo sapiens (Human) protein is Unconventional myosin-VIIb.